A 623-amino-acid chain; its full sequence is uncharacterized protein (623 aa).

5 helical membrane-spanning segments follow: residues Ile242–Leu262, Ile288–Phe308, Val318–Phe338, Val361–Val381, and Phe387–Val407.

The protein belongs to the MscS (TC 1.A.23) family.

The protein localises to the cell membrane. This is an uncharacterized protein from Helicobacter pylori (strain ATCC 700392 / 26695) (Campylobacter pylori).